We begin with the raw amino-acid sequence, 179 residues long: Large ribosomal subunit protein uL5 (179 aa).

The protein belongs to the universal ribosomal protein uL5 family. Part of the 50S ribosomal subunit; part of the 5S rRNA/L5/L18/L25 subcomplex. Contacts the 5S rRNA and the P site tRNA. Forms a bridge to the 30S subunit in the 70S ribosome.

Its function is as follows. This is one of the proteins that bind and probably mediate the attachment of the 5S RNA into the large ribosomal subunit, where it forms part of the central protuberance. In the 70S ribosome it contacts protein S13 of the 30S subunit (bridge B1b), connecting the 2 subunits; this bridge is implicated in subunit movement. Contacts the P site tRNA; the 5S rRNA and some of its associated proteins might help stabilize positioning of ribosome-bound tRNAs. In Chromobacterium violaceum (strain ATCC 12472 / DSM 30191 / JCM 1249 / CCUG 213 / NBRC 12614 / NCIMB 9131 / NCTC 9757 / MK), this protein is Large ribosomal subunit protein uL5.